The primary structure comprises 262 residues: MSQEEQPKRPQEPVTYGDVFEVSGELADKPIAPEDANMMQAAETRVFGHTQKGGAAAVMQSAATANKRGGFVHPGDTTDLAAERGVTVAQTDVPGARVTTEFVGGQVVGQYVEPRPVATAAAMEAEVVGLSLQSAITIGEALEATVQTAGNKPVDQSDAAAIQAAEVRACGTNVIAPGGIAASAQSAANHNATIDRDEDKIKLIDVLAGATGKLAADKAVTRQDAEGVVSAELRNNPNLSTHPGGVAASITAAARLNERADI.

A Nuclear localization signal (NLS) motif is present at residues 6-10 (QPKRP). 3 SMP domains span residues 14 to 68 (VTYG…ANKR), 136 to 192 (ITIG…NHNA), and 201 to 260 (IKLI…NERA).

It belongs to the LEA type SMP family. Embryo specific, only in dry mature seeds.

The protein resides in the nucleus. Its subcellular location is the nucleolus. The protein localises to the cytoplasm. Functionally, LEA proteins are late embryonic proteins abundant in higher plant seed embryos. The function of those proteins is not known. Promotes germination rate. Enhances cation toxicity (e.g. lithium ion) and osmotic stress (e.g. NaCl and sorbitol) tolerance during germination and in seedlings. The protein is Late embryogenesis abundant protein 31 of Arabidopsis thaliana (Mouse-ear cress).